The chain runs to 103 residues: Pyrimidine/purine nucleoside phosphorylase (103 aa).

Belongs to the nucleoside phosphorylase PpnP family.

It carries out the reaction a purine D-ribonucleoside + phosphate = a purine nucleobase + alpha-D-ribose 1-phosphate. The enzyme catalyses adenosine + phosphate = alpha-D-ribose 1-phosphate + adenine. The catalysed reaction is cytidine + phosphate = cytosine + alpha-D-ribose 1-phosphate. It catalyses the reaction guanosine + phosphate = alpha-D-ribose 1-phosphate + guanine. It carries out the reaction inosine + phosphate = alpha-D-ribose 1-phosphate + hypoxanthine. The enzyme catalyses thymidine + phosphate = 2-deoxy-alpha-D-ribose 1-phosphate + thymine. The catalysed reaction is uridine + phosphate = alpha-D-ribose 1-phosphate + uracil. It catalyses the reaction xanthosine + phosphate = alpha-D-ribose 1-phosphate + xanthine. In terms of biological role, catalyzes the phosphorolysis of diverse nucleosides, yielding D-ribose 1-phosphate and the respective free bases. Can use uridine, adenosine, guanosine, cytidine, thymidine, inosine and xanthosine as substrates. Also catalyzes the reverse reactions. The sequence is that of Pyrimidine/purine nucleoside phosphorylase from Shewanella baltica (strain OS223).